Reading from the N-terminus, the 212-residue chain is NADH dehydrogenase [ubiquinone] iron-sulfur protein 8, mitochondrial (212 aa).

A mitochondrion-targeting transit peptide spans 1–34 (MYRLSSSMLPRALAQAMRTGHLNGQSLHSSAVAA). 4Fe-4S ferredoxin-type domains follow at residues 104 to 133 (RRYP…IEAE) and 143 to 172 (TRYD…EGPN). Residues C113, C116, C119, C123, C152, C155, C158, and C162 each contribute to the [4Fe-4S] cluster site.

The protein belongs to the complex I 23 kDa subunit family. Complex I is composed of 45 different subunits. This is a component of the iron-sulfur (IP) fragment of the enzyme. Interacts with RAB5IF. [4Fe-4S] cluster serves as cofactor.

It localises to the mitochondrion inner membrane. It catalyses the reaction a ubiquinone + NADH + 5 H(+)(in) = a ubiquinol + NAD(+) + 4 H(+)(out). Its function is as follows. Core subunit of the mitochondrial membrane respiratory chain NADH dehydrogenase (Complex I) which catalyzes electron transfer from NADH through the respiratory chain, using ubiquinone as an electron acceptor. Essential for the catalytic activity and assembly of complex I. The sequence is that of NADH dehydrogenase [ubiquinone] iron-sulfur protein 8, mitochondrial (Ndufs8) from Mus musculus (Mouse).